The chain runs to 359 residues: G-protein coupled receptor 15 (359 aa).

Topologically, residues 1–33 (MDPEETSVYLDYYYATSPNPDIRETHSHVPYTS) are extracellular. The chain crosses the membrane as a helical span at residues 34 to 54 (VFLPVFYTAVFLTGVLGNLVL). Over 55–69 (MGALHFKPGSRRLID) the chain is Cytoplasmic. The chain crosses the membrane as a helical span at residues 70–90 (IFIINLAASDFIFLVTLPLWV). Topologically, residues 91-120 (DKEASLGLWRTGSFLCKGSSYMISVNMHCS) are extracellular. Residues 121–141 (VFLLTCMSVDRYLAIVCPVVS) traverse the membrane as a helical segment. Topologically, residues 142-149 (RKFRRTDC) are cytoplasmic. A helical transmembrane segment spans residues 150–170 (AYVVCASIWFISCLLGLPTLL). Residues 171 to 192 (SRELTLIDDKPYCAEKKATPLK) lie on the Extracellular side of the membrane. Residues 193 to 213 (LIWSLVALIFTFFVPLLNIVT) traverse the membrane as a helical segment. Residues 214–239 (CYCCIARKLCAHYQQSGRHNKKLKKS) lie on the Cytoplasmic side of the membrane. Residues 240-260 (IKIILIVVAAFLVSWLPFNTF) traverse the membrane as a helical segment. Over 261 to 283 (KLLAIVSGLQERYFPSAMLQLGM) the chain is Extracellular. Residues 284 to 304 (EVSGPLAFANSCVNPFIYYIF) traverse the membrane as a helical segment. Over 305-359 (DSYIRRAIVHCLCPCLKNYDFGSSTETSDSHLTKALSTFIHAEDFTRRRKRSVSL) the chain is Cytoplasmic. Serine 358 carries the phosphoserine modification.

It belongs to the G-protein coupled receptor 1 family. Interacts with adapter YWHAE; this interaction promotes ER-to-Golgi transport of GPR15. In terms of processing, phosphorylation is necessary for YWHAE binding and efficient surface expression. O-glycosylated. Sialylated O-glycans in the N-terminal tail inhibits binding of GPR15LG. Post-translationally, sulfation is required for efficient binding of GPR15LG.

It is found in the cell membrane. G protein-coupled receptor that plays an important role in immune homeostasis. Acts via its natural ligand GPR15LG, a chemokine-like polypeptide strongly expressed in gastrointestinal tissues. GPR15-GPR15LG signaling axis regulates intestinal homeostasis and inflammation through the migration of immune cells. Controls thereby the specific homing of T-cells, particularly FOXP3+ regulatory T-cells (Tregs), to the large intestine lamina propria. Also required for skin localization of thymus-derived dendritic epidermal T-cells. Plays an important role in mediating cytoprotective function as well as angiogenesis of thrombomodulin. Mechanistically, preferentially signals through the Gi/o pathway to inhibit adenylate cyclase activity and activate a phosphatidylinositol-calcium second messenger system that regulates the release of Ca(2+) ions from intracellular stores. This chain is G-protein coupled receptor 15 (GPR15), found in Macaca fascicularis (Crab-eating macaque).